The following is a 71-amino-acid chain: Protein SlyX homolog (71 aa).

The protein belongs to the SlyX family.

The polypeptide is Protein SlyX homolog (Thioalkalivibrio sulfidiphilus (strain HL-EbGR7)).